We begin with the raw amino-acid sequence, 465 residues long: Branched-chain amino acid permease BcaP (465 aa).

Helical transmembrane passes span 35-55 (LLGI…TGAV), 57-77 (AGPG…FAAL), 103-123 (LMAF…VSAV), 133-153 (SFLS…PGAV), 159-179 (LFNL…YLGI), 188-208 (IMVI…AVYV), 216-236 (FMPM…FAFI), 258-278 (GIIF…AIMT), 305-325 (VAGI…LVML), 355-375 (PYVA…LVPL), 380-400 (KLVN…VIVL), 413-432 (CPGV…FLIL), and 437-456 (VTIV…YFLY).

This sequence belongs to the amino acid-polyamine-organocation (APC) superfamily.

The protein localises to the cell membrane. Its activity is regulated as follows. Isoleucine uptake is efficiently reduced in the presence of 100-fold excess valine, leucine, alanine, threonine, serine, cysteine, asparagine, and a nonproteinaceous amino acid 4-azaleucine. Branched-chain amino acid transport system which is involved in the uptake of isoleucine, valine and probably leucine. Can also transport threonine, and is active as a minor serine permease. May be an amino acid permease of rather broad specificity, because several amino acids, albeit at 100-fold excess, are able to prevent isoleucine uptake. Probably does not transport methionine. Together with BraB and BrnQ, plays an important role in the activation of CodY, a branched-chain amino acid-responsive transcriptional regulator that controls the expression of several dozen transcription units in B.subtilis. In Bacillus subtilis (strain 168), this protein is Branched-chain amino acid permease BcaP.